A 1371-amino-acid polypeptide reads, in one-letter code: DNA-directed RNA polymerase subunit beta (1371 aa).

The protein belongs to the RNA polymerase beta chain family. In terms of assembly, the RNAP catalytic core consists of 2 alpha, 1 beta, 1 beta' and 1 omega subunit. When a sigma factor is associated with the core the holoenzyme is formed, which can initiate transcription.

The enzyme catalyses RNA(n) + a ribonucleoside 5'-triphosphate = RNA(n+1) + diphosphate. Its function is as follows. DNA-dependent RNA polymerase catalyzes the transcription of DNA into RNA using the four ribonucleoside triphosphates as substrates. The chain is DNA-directed RNA polymerase subunit beta from Citrifermentans bemidjiense (strain ATCC BAA-1014 / DSM 16622 / JCM 12645 / Bem) (Geobacter bemidjiensis).